The following is an 800-amino-acid chain: Structural protein ORF800 (800 aa).

Coiled coils occupy residues 98–130 (AENI…YNLA), 447–475 (LLAE…ANNL), 514–567 (AINQ…ANNL), and 606–633 (AINQ…NLLA). A disordered region spans residues 759 to 800 (AESIAESESETTESENNETTESTANSEGEKQEGEHGARLIRV). Over residues 761-776 (SIAESESETTESENNE) the composition is skewed to acidic residues. Positions 785-800 (EGEKQEGEHGARLIRV) are enriched in basic and acidic residues.

The protein localises to the virion. This is Structural protein ORF800 from Acidianus convivator (ATV).